The sequence spans 326 residues: tRNA-modifying protein YgfZ (326 aa).

Folate contacts are provided by tryptophan 27 and tryptophan 189.

This sequence belongs to the tRNA-modifying YgfZ family.

It localises to the cytoplasm. Functionally, folate-binding protein involved in regulating the level of ATP-DnaA and in the modification of some tRNAs. It is probably a key factor in regulatory networks that act via tRNA modification, such as initiation of chromosomal replication. The chain is tRNA-modifying protein YgfZ from Escherichia coli O6:K15:H31 (strain 536 / UPEC).